A 226-amino-acid polypeptide reads, in one-letter code: UPF0758 protein Sca_1264 (226 aa).

One can recognise an MPN domain in the interval 102–224 (KITSPQDAAD…YLSMVEGGYF (123 aa)). H173, H175, and D186 together coordinate Zn(2+). The JAMM motif signature appears at 173 to 186 (HNHPSGDVTPSKED).

Belongs to the UPF0758 family.

This is UPF0758 protein Sca_1264 from Staphylococcus carnosus (strain TM300).